A 62-amino-acid chain; its full sequence is Toxin Ct28 (62 aa).

The N-terminal stretch at 1-22 is a signal peptide; that stretch reads MKAFYGILIILLFCSMFKLNES. Cystine bridges form between cysteine 29-cysteine 51, cysteine 35-cysteine 56, and cysteine 39-cysteine 58. At asparagine 61 the chain carries Asparagine amide.

Belongs to the short scorpion toxin superfamily. Potassium channel inhibitor family. Alpha-KTx 02 subfamily. Expressed by the venom gland.

Its subcellular location is the secreted. In terms of biological role, blocks voltage-gated potassium channels. The protein is Toxin Ct28 of Centruroides tecomanus (Scorpion).